Here is a 204-residue protein sequence, read N- to C-terminus: CASP-like protein 2A1 (204 aa).

The segment covering 1-11 (MEKSNDHDKAS) has biased composition (basic and acidic residues). Residues 1 to 25 (MEKSNDHDKASHGGSGGGATEKWEE) form a disordered region. Topologically, residues 1–32 (MEKSNDHDKASHGGSGGGATEKWEETSPGIRT) are cytoplasmic. The helical transmembrane segment at 33 to 53 (AETMLRLAPVGLCVAALVVML) threads the bilayer. The Extracellular portion of the chain corresponds to 54-74 (KDSETNEFGSISYSNLTAFRY). An N-linked (GlcNAc...) asparagine glycan is attached at asparagine 68. Residues 75–95 (LVHANGICAGYSLLSAAIAAM) form a helical membrane-spanning segment. At 96–113 (PRSSSTMPRVWTFFCLDQ) the chain is on the cytoplasmic side. The chain crosses the membrane as a helical span at residues 114 to 134 (LLTYLVLAAGAVSAEVLYLAY). Over 135-155 (NGDSAITWSDACSSYGGFCHR) the chain is Extracellular. A helical transmembrane segment spans residues 156-176 (ATASVIITFFVVCFYILLSLI). Topologically, residues 177–204 (SSYKLFTRFDPPSIVDSDKTLEVAVFGS) are cytoplasmic.

The protein belongs to the Casparian strip membrane proteins (CASP) family. As to quaternary structure, homodimer and heterodimers.

The protein localises to the cell membrane. The sequence is that of CASP-like protein 2A1 from Arabidopsis lyrata subsp. lyrata (Lyre-leaved rock-cress).